The sequence spans 696 residues: Polyribonucleotide nucleotidyltransferase (696 aa).

Residues Asp-489 and Asp-495 each coordinate Mg(2+). Positions 556 to 615 constitute a KH domain; that stretch reads PQYVTMKINPEKIRDVIGKGGVVIREITEATNCAIDISDDGTIKIAAHTTEEGEAAKRRI. One can recognise an S1 motif domain in the interval 625–693; it reads GKVYEGTVVK…RQGRVRLSMK (69 aa).

It belongs to the polyribonucleotide nucleotidyltransferase family. Component of the RNA degradosome, which is a multiprotein complex involved in RNA processing and mRNA degradation. The cofactor is Mg(2+).

The protein localises to the cytoplasm. The catalysed reaction is RNA(n+1) + phosphate = RNA(n) + a ribonucleoside 5'-diphosphate. In terms of biological role, involved in mRNA degradation. Catalyzes the phosphorolysis of single-stranded polyribonucleotides processively in the 3'- to 5'-direction. The chain is Polyribonucleotide nucleotidyltransferase from Coxiella burnetii (strain RSA 331 / Henzerling II).